Reading from the N-terminus, the 165-residue chain is ATP synthase subunit b (165 aa).

Residues 7-27 (STTIGDIIIVSGSVLLLFILI) form a helical membrane-spanning segment.

The protein belongs to the ATPase B chain family. As to quaternary structure, F-type ATPases have 2 components, F(1) - the catalytic core - and F(0) - the membrane proton channel. F(1) has five subunits: alpha(3), beta(3), gamma(1), delta(1), epsilon(1). F(0) has three main subunits: a(1), b(2) and c(10-14). The alpha and beta chains form an alternating ring which encloses part of the gamma chain. F(1) is attached to F(0) by a central stalk formed by the gamma and epsilon chains, while a peripheral stalk is formed by the delta and b chains.

The protein localises to the cell membrane. F(1)F(0) ATP synthase produces ATP from ADP in the presence of a proton or sodium gradient. F-type ATPases consist of two structural domains, F(1) containing the extramembraneous catalytic core and F(0) containing the membrane proton channel, linked together by a central stalk and a peripheral stalk. During catalysis, ATP synthesis in the catalytic domain of F(1) is coupled via a rotary mechanism of the central stalk subunits to proton translocation. Its function is as follows. Component of the F(0) channel, it forms part of the peripheral stalk, linking F(1) to F(0). This Streptococcus agalactiae serotype Ia (strain ATCC 27591 / A909 / CDC SS700) protein is ATP synthase subunit b.